A 75-amino-acid chain; its full sequence is RNA-binding protein Hfq (75 aa).

The Sm domain maps to 9–69; sequence DQFLNQLRKE…ISTFAPERNI (61 aa).

It belongs to the Hfq family. In terms of assembly, homohexamer.

In terms of biological role, RNA chaperone that binds small regulatory RNA (sRNAs) and mRNAs to facilitate mRNA translational regulation in response to envelope stress, environmental stress and changes in metabolite concentrations. Also binds with high specificity to tRNAs. The sequence is that of RNA-binding protein Hfq from Geobacillus kaustophilus (strain HTA426).